The chain runs to 910 residues: Eukaryotic translation initiation factor 3 subunit C (910 aa).

The disordered stretch occupies residues 1–21; sequence MSRFFANGSESESESSEEEIQ. The span at 11 to 20 shows a compositional bias: acidic residues; the sequence is SESESSEEEI. Residues serine 34, serine 165, serine 176, and serine 185 each carry the phosphoserine modification. Positions 157–281 are disordered; the sequence is FREAPDQESE…KRAEDDEDGE (125 aa). Acidic residues predominate over residues 162-186; it reads DQESEAEDEVVALESDGGDAGDDSD. The segment covering 193–207 has biased composition (low complexity); sequence EAAPKAVKSAPAKAA. The segment covering 209-235 has biased composition (acidic residues); it reads ADDDDSDDSIDWDSDSESETESSDDEN. Residues 240–268 show a composition bias toward basic and acidic residues; the sequence is MRERFLKRTTEKEEKDDDKRKDKRKEQKT. The PCI domain maps to 639–815; that stretch reads FHMHINLELL…ETVGMHRSEP (177 aa). Residues 847 to 910 are disordered; it reads FFQRGNMGNR…QQQVQTIDEE (64 aa). Low complexity predominate over residues 862–874; the sequence is NRNQNNQGGNWLG. A compositionally biased stretch (basic residues) spans 882-891; that stretch reads RNRNQRGHHK. The span at 895–910 shows a compositional bias: low complexity; sequence DRQQQQQQQVQTIDEE.

This sequence belongs to the eIF-3 subunit C family. As to quaternary structure, component of the eukaryotic translation initiation factor 3 (eIF-3) complex. The eIF-3 complex interacts with pix.

It localises to the cytoplasm. Its function is as follows. Component of the eukaryotic translation initiation factor 3 (eIF-3) complex, which is involved in protein synthesis of a specialized repertoire of mRNAs and, together with other initiation factors, stimulates binding of mRNA and methionyl-tRNAi to the 40S ribosome. The eIF-3 complex specifically targets and initiates translation of a subset of mRNAs involved in cell proliferation. The protein is Eukaryotic translation initiation factor 3 subunit C of Drosophila sechellia (Fruit fly).